The sequence spans 493 residues: Lysine--tRNA ligase (493 aa).

The Mg(2+) site is built by E402 and E409.

It belongs to the class-II aminoacyl-tRNA synthetase family. In terms of assembly, homodimer. It depends on Mg(2+) as a cofactor.

Its subcellular location is the cytoplasm. The catalysed reaction is tRNA(Lys) + L-lysine + ATP = L-lysyl-tRNA(Lys) + AMP + diphosphate. This chain is Lysine--tRNA ligase, found in Fusobacterium nucleatum subsp. nucleatum (strain ATCC 25586 / DSM 15643 / BCRC 10681 / CIP 101130 / JCM 8532 / KCTC 2640 / LMG 13131 / VPI 4355).